We begin with the raw amino-acid sequence, 342 residues long: Nucleoid-associated protein Sbal223_1817 (342 aa).

This sequence belongs to the YejK family.

It is found in the cytoplasm. The protein resides in the nucleoid. This is Nucleoid-associated protein Sbal223_1817 from Shewanella baltica (strain OS223).